The following is a 316-amino-acid chain: ATP synthase gamma chain (316 aa).

It belongs to the ATPase gamma chain family. In terms of assembly, F-type ATPases have 2 components, CF(1) - the catalytic core - and CF(0) - the membrane proton channel. CF(1) has five subunits: alpha(3), beta(3), gamma(1), delta(1), epsilon(1). CF(0) has three main subunits: a, b and c.

Its subcellular location is the cellular thylakoid membrane. In terms of biological role, produces ATP from ADP in the presence of a proton gradient across the membrane. The gamma chain is believed to be important in regulating ATPase activity and the flow of protons through the CF(0) complex. The sequence is that of ATP synthase gamma chain from Synechococcus elongatus (strain ATCC 33912 / PCC 7942 / FACHB-805) (Anacystis nidulans R2).